A 282-amino-acid chain; its full sequence is Homeobox protein pv.1 (282 aa).

2 stretches are compositionally biased toward basic and acidic residues: residues 17–26 and 44–59; these read EEAADGKDSM and YAKE…DVQE. Residues 17–128 are disordered; the sequence is EEAADGKDSM…HRGESPKSDL (112 aa). 2 stretches are compositionally biased toward polar residues: residues 86 to 96 and 103 to 114; these read WGSSDDFSSVG and EGSPSPMRNSQE. Basic and acidic residues predominate over residues 116–128; the sequence is ETDHRGESPKSDL. Positions 129 to 188 form a DNA-binding region, homeobox; that stretch reads QRHLRTAFTPQQISKLEQAFNKQRYLGASERKKLATSLRLSEIQVKTWFQNRRMKLKRQI.

As to expression, expressed in the ventral marginal zone of blastulae. At early gastrulation, expression begins to spread to the animal pole (ectoderm), and at stage 11.5 is expressed in a gradient across the animal cap, with levels highest in the ventral region. At the end of gastrulation, predominantly localized to the ventral and lateral regions of the closing slit blastopore. Also expressed at a low level in ventral endoderm.

The protein localises to the nucleus. Transcriptional repressor. Acts in a ventral signaling pathway downstream of bmp4, which suppresses dorsal mesoderm formation and leads to both ventral mesoderm and ventral ectoderm formation. Acts in the ectoderm to simultaneously specify epidermal lineages and restrict neuralization. Represses transcription of dorsal-specific genes. Binds to DNA, with preference for the target sequences 5'-TAATGC-3' and 5'-TAATTG-3'. Acts in a pathway downstream of bmp4 and fgf to negatively regulate erythroid specification. This is Homeobox protein pv.1 from Xenopus laevis (African clawed frog).